A 170-amino-acid chain; its full sequence is UPF0220 protein C8D2.02c (170 aa).

4 consecutive transmembrane segments (helical) span residues 23–43, 54–74, 101–121, and 136–156; these read LGVY…VDAA, LHIT…IVIV, ILFI…TVFI, and MGSA…ALWI.

Belongs to the UPF0220 family.

The protein resides in the membrane. This is UPF0220 protein C8D2.02c from Schizosaccharomyces pombe (strain 972 / ATCC 24843) (Fission yeast).